The following is a 221-amino-acid chain: Uridylate kinase (221 aa).

7–11 (KISGK) is a binding site for ATP. Gly-43 contributes to the UMP binding site. Gly-44 and Arg-48 together coordinate ATP. UMP-binding positions include Asp-62 and 109–115 (LQPGQST). Residues Thr-135 and Tyr-141 each coordinate ATP.

The protein belongs to the UMP kinase family. Homohexamer.

It localises to the cytoplasm. The catalysed reaction is UMP + ATP = UDP + ADP. It participates in pyrimidine metabolism; CTP biosynthesis via de novo pathway; UDP from UMP (UMPK route): step 1/1. Its activity is regulated as follows. Inhibited by UTP. Functionally, catalyzes the reversible phosphorylation of UMP to UDP. This is Uridylate kinase from Ignicoccus hospitalis (strain KIN4/I / DSM 18386 / JCM 14125).